The sequence spans 179 residues: Tetratricopeptide repeat protein 36 (179 aa).

TPR repeat units lie at residues 43 to 76, 77 to 110, and 115 to 148; these read SSQLEREAVRLAESMNVTDAIEKFTEAIQVCPLN, PSAYNNRAQAYRLQNSPEKALEDLNESLRLAGPK, and CQAYVQRASIYRLQGDDEKARADFAAAAELGSSF.

The protein belongs to the TTC36 family.

The polypeptide is Tetratricopeptide repeat protein 36 (Caenorhabditis briggsae).